The chain runs to 186 residues: Enhancer of split m7 protein (186 aa).

In terms of domain architecture, bHLH spans 13–68 (YRKVMKPLLERKRRARINKCLDELKDLMAECVAQTGDAKFEKADILEVTVQHLRKL). Residues 83–116 (FRAGYIRAANEVSRALASLPRVDVAFGTTLMTHL) enclose the Orange domain. Residues 183-186 (WRPW) carry the WRPW motif motif.

Transcription repression requires formation of a complex with a corepressor protein (Groucho). Forms homodimers.

It is found in the nucleus. Functionally, participates in the control of cell fate choice by uncommitted neuroectodermal cells in the embryo. Transcriptional repressor. Binds DNA on N-box motifs: 5'-CACNAG-3'. The chain is Enhancer of split m7 protein from Drosophila melanogaster (Fruit fly).